Reading from the N-terminus, the 528-residue chain is 2-isopropylmalate synthase (528 aa).

Positions 12 to 279 (IRIFDTTLRD…DSSINTPRIV (268 aa)) constitute a Pyruvate carboxyltransferase domain. Positions 21, 214, 216, and 250 each coordinate Mn(2+). The tract at residues 401-528 (RLASMTISDV…TTEAPAPATA (128 aa)) is regulatory domain.

Belongs to the alpha-IPM synthase/homocitrate synthase family. LeuA type 1 subfamily. In terms of assembly, homodimer. Mn(2+) serves as cofactor.

Its subcellular location is the cytoplasm. The enzyme catalyses 3-methyl-2-oxobutanoate + acetyl-CoA + H2O = (2S)-2-isopropylmalate + CoA + H(+). The protein operates within amino-acid biosynthesis; L-leucine biosynthesis; L-leucine from 3-methyl-2-oxobutanoate: step 1/4. Functionally, catalyzes the condensation of the acetyl group of acetyl-CoA with 3-methyl-2-oxobutanoate (2-ketoisovalerate) to form 3-carboxy-3-hydroxy-4-methylpentanoate (2-isopropylmalate). The polypeptide is 2-isopropylmalate synthase (Stenotrophomonas maltophilia (strain R551-3)).